The following is a 150-amino-acid chain: Transcription antitermination protein NusB (150 aa).

This sequence belongs to the NusB family.

In terms of biological role, involved in transcription antitermination. Required for transcription of ribosomal RNA (rRNA) genes. Binds specifically to the boxA antiterminator sequence of the ribosomal RNA (rrn) operons. The sequence is that of Transcription antitermination protein NusB from Streptococcus pyogenes serotype M1.